The chain runs to 291 residues: MANNRNELNKNLAQMLKGGVIMDVTTPEQAKIAQDAGACAVMALERIPADIRAAGGVSRMSDPAMIKGIQEAVSIPVMAKVRIGHIAEARILQAIEIDYIDESEVLSPADDVYHIDKNRFDVPFVCGAKNLGEALRRVAEGASMIRTKGEPGTGDVIQAVRHMRTMNKQIRELVSLRDDEVYEAAKQLAVPYDLAKYVHDNGRLPVVNFAAGGVATPADAALMMELGAEGVFVGSGIFKSGDPAKRAAAIVQATANWQDAELLARLSENLGEAMVGINEDEIETIMAARGE.

D23 is a D-ribose 5-phosphate binding site. Catalysis depends on K80, which acts as the Schiff-base intermediate with D-ribose 5-phosphate. Residue G152 coordinates D-ribose 5-phosphate. R164 serves as a coordination point for D-glyceraldehyde 3-phosphate. D-ribose 5-phosphate contacts are provided by residues G213 and 234–235 (GS).

This sequence belongs to the PdxS/SNZ family. In terms of assembly, in the presence of PdxT, forms a dodecamer of heterodimers.

It catalyses the reaction aldehydo-D-ribose 5-phosphate + D-glyceraldehyde 3-phosphate + L-glutamine = pyridoxal 5'-phosphate + L-glutamate + phosphate + 3 H2O + H(+). It participates in cofactor biosynthesis; pyridoxal 5'-phosphate biosynthesis. Catalyzes the formation of pyridoxal 5'-phosphate from ribose 5-phosphate (RBP), glyceraldehyde 3-phosphate (G3P) and ammonia. The ammonia is provided by the PdxT subunit. Can also use ribulose 5-phosphate and dihydroxyacetone phosphate as substrates, resulting from enzyme-catalyzed isomerization of RBP and G3P, respectively. The protein is Pyridoxal 5'-phosphate synthase subunit PdxS of Bifidobacterium adolescentis (strain ATCC 15703 / DSM 20083 / NCTC 11814 / E194a).